Here is a 132-residue protein sequence, read N- to C-terminus: Large ribosomal subunit protein uL14 (132 aa).

It belongs to the universal ribosomal protein uL14 family. In terms of assembly, part of the 50S ribosomal subunit. Forms a cluster with proteins L3 and L24e, part of which may contact the 16S rRNA in 2 intersubunit bridges.

Binds to 23S rRNA. Forms part of two intersubunit bridges in the 70S ribosome. This chain is Large ribosomal subunit protein uL14, found in Methanospirillum hungatei JF-1 (strain ATCC 27890 / DSM 864 / NBRC 100397 / JF-1).